Reading from the N-terminus, the 319-residue chain is Acetyl-coenzyme A carboxylase carboxyl transferase subunit alpha (319 aa).

In terms of domain architecture, CoA carboxyltransferase C-terminal spans 35–296 (DLDKEIEQLE…KATLLRQLAE (262 aa)).

It belongs to the AccA family. In terms of assembly, acetyl-CoA carboxylase is a heterohexamer composed of biotin carboxyl carrier protein (AccB), biotin carboxylase (AccC) and two subunits each of ACCase subunit alpha (AccA) and ACCase subunit beta (AccD).

It localises to the cytoplasm. The enzyme catalyses N(6)-carboxybiotinyl-L-lysyl-[protein] + acetyl-CoA = N(6)-biotinyl-L-lysyl-[protein] + malonyl-CoA. It functions in the pathway lipid metabolism; malonyl-CoA biosynthesis; malonyl-CoA from acetyl-CoA: step 1/1. Component of the acetyl coenzyme A carboxylase (ACC) complex. First, biotin carboxylase catalyzes the carboxylation of biotin on its carrier protein (BCCP) and then the CO(2) group is transferred by the carboxyltransferase to acetyl-CoA to form malonyl-CoA. In Vibrio vulnificus (strain CMCP6), this protein is Acetyl-coenzyme A carboxylase carboxyl transferase subunit alpha.